Reading from the N-terminus, the 423-residue chain is Histidine--tRNA ligase (423 aa).

It belongs to the class-II aminoacyl-tRNA synthetase family.

It is found in the cytoplasm. The enzyme catalyses tRNA(His) + L-histidine + ATP = L-histidyl-tRNA(His) + AMP + diphosphate + H(+). The chain is Histidine--tRNA ligase from Picrophilus torridus (strain ATCC 700027 / DSM 9790 / JCM 10055 / NBRC 100828 / KAW 2/3).